The sequence spans 287 residues: tRNA uridine(34) hydroxylase (287 aa).

The Rhodanese domain maps to Glu-132–Tyr-226. Catalysis depends on Cys-186, which acts as the Cysteine persulfide intermediate.

It belongs to the TrhO family.

It catalyses the reaction uridine(34) in tRNA + AH2 + O2 = 5-hydroxyuridine(34) in tRNA + A + H2O. Catalyzes oxygen-dependent 5-hydroxyuridine (ho5U) modification at position 34 in tRNAs. The chain is tRNA uridine(34) hydroxylase from Paraburkholderia xenovorans (strain LB400).